The chain runs to 318 residues: Protein-L-histidine N-pros-methyltransferase (318 aa).

The N-terminal stretch at 1–18 (MRLLAGWLCLSLASVWLA) is a signal peptide. Residue asparagine 35 is glycosylated (N-linked (GlcNAc...) asparagine). Residues glutamate 174, asparagine 210, and tyrosine 295 each coordinate S-adenosyl-L-homocysteine.

The protein belongs to the METTL9 family. As to expression, expressed in liver, colon, small intestine, skin, kidney and to a lesser extent in spleen, lung, thymus and stomach. Not detected in fibroblast and endothelial cells.

The protein localises to the endoplasmic reticulum. It localises to the mitochondrion. It carries out the reaction L-histidyl-[protein] + S-adenosyl-L-methionine = N(pros)-methyl-L-histidyl-[protein] + S-adenosyl-L-homocysteine + H(+). Protein-histidine N-methyltransferase that specifically catalyzes 1-methylhistidine (pros-methylhistidine) methylation of target proteins. Specifically methylates the second His of proteins with a His-x-His (HxH) motif (where 'x' is preferably a small amino acid), while exploiting the first one as a recognition signature. Catalyzes methylation of target proteins such as S100A9, NDUFB3, SLC39A5, SLC39A7, ARMC6 and DNAJB12; 1-methylhistidine modification may affect the binding of zinc and other metals to its target proteins. Constitutes the main methyltransferase for the 1-methylhistidine modification in cell. This chain is Protein-L-histidine N-pros-methyltransferase, found in Mus musculus (Mouse).